A 556-amino-acid polypeptide reads, in one-letter code: Glucose-6-phosphate isomerase (556 aa).

Residue Glu364 is the Proton donor of the active site. Active-site residues include His395 and Lys521.

It belongs to the GPI family.

The protein resides in the cytoplasm. The catalysed reaction is alpha-D-glucose 6-phosphate = beta-D-fructose 6-phosphate. The protein operates within carbohydrate biosynthesis; gluconeogenesis. Its pathway is carbohydrate degradation; glycolysis; D-glyceraldehyde 3-phosphate and glycerone phosphate from D-glucose: step 2/4. Catalyzes the reversible isomerization of glucose-6-phosphate to fructose-6-phosphate. The protein is Glucose-6-phosphate isomerase of Corynebacterium kroppenstedtii (strain DSM 44385 / JCM 11950 / CIP 105744 / CCUG 35717).